Consider the following 188-residue polypeptide: Succinate dehydrogenase [ubiquinone] cytochrome b large subunit, mitochondrial (188 aa).

A mitochondrion-targeting transit peptide spans 1 to 31 (MSLLPYNATLCRVLRHNVKFIRSVQTSAARV). At 32 to 69 (SAEKTPIQVWGWDYLMRQRALKRPIAPHLTIYKPQMTW) the chain is on the mitochondrial matrix side. The chain crosses the membrane as a helical span at residues 70–95 (MVSGLHRVTGCAMAGTLLIGGVGFSV). A rhodoquinol is bound by residues Ser-72 and Arg-76. Residues Ser-72 and Arg-76 each coordinate a ubiquinone. The Mitochondrial intermembrane segment spans residues 96–113 (LPLDFTTFVEFIRGLGIP). A helical transmembrane segment spans residues 114–140 (WVILDTFKFIIAFPIAFHTLNGIRFIG). His-131 contributes to the heme b binding site. The Mitochondrial matrix segment spans residues 141 to 153 (FDMAKGTDIPSIY). A helical transmembrane segment spans residues 154–176 (RGAYLVLGLAALISLAVVVYPRW). Topologically, residues 177 to 188 (ERHKKATLPTNH) are mitochondrial intermembrane.

Belongs to the cytochrome b558 family. In terms of assembly, component of the mitochondrial electron transport chain complex II composed of four subunits: a flavoprotein (Fp), an iron-sulfur protein (Ip), and a large cytochrome b (CybL) subunit and a small cytochrome b (CybS) subunit. There are 2 developmental stage-specific forms of complex II which have the Ip and CybL subunits in common. Complex II from the free-living larvae (aerobic environment) acts as a succinate dehydrogenase and is composed of the common subunit Ip and CybL and the stage specific subunits FpL and CybSL. Complex II from parasitic larvae and adults (anaerobic environment) acts as a fumarate reductase and is composed of the common subunit Ip and CybL and the stage specific subunits FpA and CybSA. The cofactor is heme b. In terms of tissue distribution, expressed in adult muscles (at protein level).

The protein localises to the mitochondrion inner membrane. It functions in the pathway carbohydrate metabolism; tricarboxylic acid cycle; fumarate from succinate (eukaryal route): step 1/1. In terms of biological role, membrane-bound large subunit (CybL) of the mitochondrial electron transport chain complex II, which together with the membrane-bound small subunit (CybS), anchor the catalytic subunits to the inner mitochondria membrane. During the free-living egg-larvae stages, which occur in an aerobic environment, complex II acts as a succinate dehydrogenase by transferring electrons from succinate to ubiquinone. During the parasitic larvae and adult stages, which occur in an anaerobic environment, complex II acts as a fumarate reductase by transferring electrons from rhodoquinol to fumarate. This is Succinate dehydrogenase [ubiquinone] cytochrome b large subunit, mitochondrial from Ascaris suum (Pig roundworm).